The primary structure comprises 560 residues: ATP synthase subunit beta, mitochondrial (560 aa).

A mitochondrion-targeting transit peptide spans 1 to 54; the sequence is MASRRLLASLLRQSAQRGGGLISRSLGNSIPKSASRASSRASPKGFLLNRAVQY. Disordered stretches follow at residues 20 to 44 and 58 to 81; these read GLISRSLGNSIPKSASRASSRASPK and AAAPASQPSTPPKSGSEPSGKITD. Composition is skewed to low complexity over residues 33–42 and 58–71; these read SASRASSRAS and AAAPASQPSTPPKS. Residue 235–242 participates in ATP binding; that stretch reads GGAGVGKT.

Belongs to the ATPase alpha/beta chains family. In terms of assembly, F-type ATPases have 2 components, CF(1) - the catalytic core - and CF(0) - the membrane proton channel. CF(1) has five subunits: alpha(3), beta(3), gamma(1), delta(1), epsilon(1). CF(0) has three main subunits: a, b and c.

Its subcellular location is the mitochondrion. The protein localises to the mitochondrion inner membrane. It catalyses the reaction ATP + H2O + 4 H(+)(in) = ADP + phosphate + 5 H(+)(out). Its function is as follows. Mitochondrial membrane ATP synthase (F(1)F(0) ATP synthase or Complex V) produces ATP from ADP in the presence of a proton gradient across the membrane which is generated by electron transport complexes of the respiratory chain. F-type ATPases consist of two structural domains, F(1) - containing the extramembraneous catalytic core, and F(0) - containing the membrane proton channel, linked together by a central stalk and a peripheral stalk. During catalysis, ATP synthesis in the catalytic domain of F(1) is coupled via a rotary mechanism of the central stalk subunits to proton translocation. Subunits alpha and beta form the catalytic core in F(1). Rotation of the central stalk against the surrounding alpha(3)beta(3) subunits leads to hydrolysis of ATP in three separate catalytic sites on the beta subunits. This chain is ATP synthase subunit beta, mitochondrial (ATPB), found in Nicotiana plumbaginifolia (Leadwort-leaved tobacco).